A 1580-amino-acid polypeptide reads, in one-letter code: Collagen alpha-1(XVI) chain (1580 aa).

An N-terminal signal peptide occupies residues 1–21 (MLTSWAPGLWVLGLWATFSHG). N-linked (GlcNAc...) asparagine glycosylation occurs at Asn-47. Residues 50-231 (GFNLIRRLNL…LQQAHIYCDP (182 aa)) enclose the Laminin G-like domain. The nonhelical region 10 (NC10) stretch occupies residues 232 to 374 (ELVLEEGCCE…SPDAPLQCVE (143 aa)). The disordered stretch occupies residues 324-547 (RESNVTLGPS…DPAPAWEGLG (224 aa)). Asn-327 is a glycosylation site (N-linked (GlcNAc...) asparagine). The Collagen-like 1 domain occupies 375 to 424 (GPKGEKGESGDLGPPGLPGPTGQKGQKGEKGDGGLKGLPGKPGRDGRPGE). A triple-helical region 9 (COL9) with 3 imperfections region spans residues 375–509 (GPKGEKGESG…PGTKGEKGDP (135 aa)). The segment covering 449-460 (PGPPGLPGPPGI) has biased composition (pro residues). Positions 486–495 (GKEGPGGKPG) are enriched in gly residues. The interval 510–524 (CEVCPTLPEGSQNFV) is nonhelical region 9 (NC9). The segment at 525–570 (GLPGKPGPKGEPGDPAPAWEGLGTVGLKGDRGDPGIQGMKGEKGEP) is triple-helical region 8 (COL8) with 1 imperfection. The Cell attachment site signature appears at 555 to 557 (RGD). The tract at residues 571–586 (CSSCSSGVGAQHLGPS) is nonhelical region 8 (NC8). The span at 585–598 (PSPGHGLPGLPGTS) shows a compositional bias: low complexity. Residues 585-935 (PSPGHGLPGL…LPGQPGLTAE (351 aa)) form a disordered region. A triple-helical region 7 (COL7) with 1 imperfection region spans residues 587–640 (PGHGLPGLPGTSGIPGPRGLKGEKGSFGDTGPAGVPGSPGPVGPAGIKGAKGEP). 2 consecutive Collagen-like domains span residues 590 to 643 (GLPG…PCEP) and 676 to 725 (GLPG…PAGP). The nonhelical region 7 (NC7) stretch occupies residues 641–661 (CEPCTALSELQDGDMRVVHLP). The segment at 662 to 732 (GPAGEKGEPG…AGPKGEKGDG (71 aa)) is triple-helical region 6 (COL6) with 1 imperfection. Residues 683–693 (KAGERGLKGQK) show a composition bias toward basic and acidic residues. Residues 698-714 (NPGDPGTPGITGQPGIS) show a composition bias toward low complexity. The interval 733 to 747 (CTACPSLQGALTDVS) is nonhelical region 6 (NC6). The interval 748 to 870 (GLPGKPGPKG…RGEKGEPGEC (123 aa)) is triple-helical region 5 (COL5) with 3 imperfections. Residues 797–848 (GAEGPQGEPGTQGLPGTQGLPGPRGPPGSAGEKGAQGSPGPKGAIGPMGPPG) enclose the Collagen-like 4 domain. Positions 801–817 (PQGEPGTQGLPGTQGLP) are enriched in low complexity. The segment at 871–881 (SCPSRGEPIFS) is nonhelical region 5 (NC5). The interval 882–933 (GMPGAPGLWMGSSSQPGPQGPPGVPGPPGPPGMPGLQGVPGHNGLPGQPGLT) is triple-helical region 4 (COL4) with 2 imperfections. A compositionally biased stretch (pro residues) spans 899-914 (PQGPPGVPGPPGPPGM). The nonhelical region 4 (NC4) stretch occupies residues 934–967 (AELGSLPIEKHLLKSICGDCAQGQTAHPAFLLEK). The tract at residues 968-982 (GEKGDQGIPGVPGFD) is triple-helical region 3 (COL3). The interval 983-1005 (NCARCFIERERPRAEEARGDNSE) is nonhelical region 3 (NC3). Disordered regions lie at residues 995–1405 (RAEE…LPGS) and 1445–1523 (AAAP…GYGK). A Cell attachment site motif is present at residues 1000–1002 (RGD). A Collagen-like 5 domain is found at 1006–1063 (GEPGCSGSPGLPGPPGMPGQRGEEGPPGMRGSPGPPGPIGLQGERGLTGLTGDKGEPG). Residues 1006–1409 (GEPGCSGSPG…PGLPGSMGDM (404 aa)) are triple-helical region 2 (COL2) with 2 imperfections. A compositionally biased stretch (low complexity) spans 1098 to 1107 (SGPPGSEGLP). Pro residues-rich tracts occupy residues 1139-1148 (FPGPPGPPGF) and 1178-1187 (SPGPPGPPGI). Residues 1196–1205 (LDGKDGKPGL) are compositionally biased toward basic and acidic residues. The Cell attachment site motif lies at 1206 to 1208 (RGD). The Collagen-like 6 domain maps to 1210–1263 (GPAGPPGLMGPPGFKGKTGHPGLPGPKGDCGKPGPPGSSGRPGAEGEPGAMGPQ). The span at 1247–1263 (SSGRPGAEGEPGAMGPQ) shows a compositional bias: low complexity. Residues 1265–1281 (RPGPPGHLGPPGQPGPP) show a composition bias toward pro residues. Collagen-like domains lie at 1350–1407 (GQKG…GSMG), 1448–1500 (PGRP…GDIG), and 1504–1552 (AGEN…GKAG). The segment covering 1362-1371 (GMPGGPGKSG) has biased composition (gly residues). Low complexity predominate over residues 1396 to 1405 (NPGLPGLPGS). Positions 1410 to 1448 (VNYDDIKRFIRQEIIKLFDERMAYYTSRMQFPMEVAAAP) are nonhelical region 2 (NC2). The interval 1449–1554 (GRPGPPGKDG…MGQPGKAGHC (106 aa)) is triple-helical region 1 (COL1) with 2 imperfections. The interval 1555–1580 (NPSDCFGAMPMEQQYPPMKSMKGPFG) is nonhelical region 1 (NC1).

It belongs to the fibril-associated collagens with interrupted helices (FACIT) family. In terms of assembly, homotrimer. Interacts with FBN1, fibronectin and integrins ITGA1/ITGB1 and ITGA2/ITGB1. Integrin ITGA1/ITGB1 binds to a unique site within COL16A1 located close to its C-terminal end between collagenous domains COL1-COL3. Post-translationally, prolines at the third position of the tripeptide repeating unit (G-X-Y) are hydroxylated in some or all of the chains. In terms of processing, glycosylated. In terms of tissue distribution, expressed in most tissues examined with highest levels of expression observed in heart. Strongly expressed in cortical and medullar regions of kidney and more weakly expressed in lung. Also detected in the ciliary muscle of the eye, on the serosa layer lining the muscularis externa of intestinal tissue, and in the perimysium membrane lining both the cardiac muscle bundle and the smooth muscle tissue of the small intestine. Strongly stained in particulate or granular structures. Not detected in brain or skeletal muscle.

The protein localises to the secreted. The protein resides in the extracellular space. It localises to the extracellular matrix. In terms of biological role, involved in mediating cell attachment and inducing integrin-mediated cellular reactions, such as cell spreading and alterations in cell morphology. In Mus musculus (Mouse), this protein is Collagen alpha-1(XVI) chain.